The chain runs to 465 residues: Ribulose bisphosphate carboxylase large chain (465 aa).

K4 bears the N6,N6,N6-trimethyllysine mark. 2 residues coordinate substrate: N113 and T163. Catalysis depends on K165, which acts as the Proton acceptor. K167 is a binding site for substrate. K191, D193, and E194 together coordinate Mg(2+). N6-carboxylysine is present on K191. H284 (proton acceptor) is an active-site residue. Residues R285, H317, and S369 each coordinate substrate.

This sequence belongs to the RuBisCO large chain family. Type I subfamily. Heterohexadecamer of 8 large chains and 8 small chains; disulfide-linked. The disulfide link is formed within the large subunit homodimers. It depends on Mg(2+) as a cofactor. The disulfide bond which can form in the large chain dimeric partners within the hexadecamer appears to be associated with oxidative stress and protein turnover.

It localises to the plastid. The protein resides in the chloroplast. It carries out the reaction 2 (2R)-3-phosphoglycerate + 2 H(+) = D-ribulose 1,5-bisphosphate + CO2 + H2O. The enzyme catalyses D-ribulose 1,5-bisphosphate + O2 = 2-phosphoglycolate + (2R)-3-phosphoglycerate + 2 H(+). RuBisCO catalyzes two reactions: the carboxylation of D-ribulose 1,5-bisphosphate, the primary event in carbon dioxide fixation, as well as the oxidative fragmentation of the pentose substrate in the photorespiration process. Both reactions occur simultaneously and in competition at the same active site. This chain is Ribulose bisphosphate carboxylase large chain, found in Cornus canadensis (Bunchberry dogwood).